The following is a 671-amino-acid chain: DNA ligase (671 aa).

NAD(+)-binding positions include 32–36, 81–82, and Glu113; these read DAEYD and SL. Lys115 functions as the N6-AMP-lysine intermediate in the catalytic mechanism. Residues Arg136, Glu173, Lys290, and Lys314 each coordinate NAD(+). Zn(2+) is bound by residues Cys408, Cys411, Cys426, and Cys432. The 79-residue stretch at 593 to 671 folds into the BRCT domain; the sequence is EIDSPFAGKT…EAEMIRLLGA (79 aa).

This sequence belongs to the NAD-dependent DNA ligase family. LigA subfamily. It depends on Mg(2+) as a cofactor. Requires Mn(2+) as cofactor.

The catalysed reaction is NAD(+) + (deoxyribonucleotide)n-3'-hydroxyl + 5'-phospho-(deoxyribonucleotide)m = (deoxyribonucleotide)n+m + AMP + beta-nicotinamide D-nucleotide.. Functionally, DNA ligase that catalyzes the formation of phosphodiester linkages between 5'-phosphoryl and 3'-hydroxyl groups in double-stranded DNA using NAD as a coenzyme and as the energy source for the reaction. It is essential for DNA replication and repair of damaged DNA. The chain is DNA ligase from Salmonella typhimurium (strain LT2 / SGSC1412 / ATCC 700720).